The sequence spans 267 residues: Hydroxyethylthiazole kinase 2 (267 aa).

Residue M41 participates in substrate binding. ATP is bound by residues K116 and T166. Residue G193 participates in substrate binding.

This sequence belongs to the Thz kinase family. The cofactor is Mg(2+).

The catalysed reaction is 5-(2-hydroxyethyl)-4-methylthiazole + ATP = 4-methyl-5-(2-phosphooxyethyl)-thiazole + ADP + H(+). Its pathway is cofactor biosynthesis; thiamine diphosphate biosynthesis; 4-methyl-5-(2-phosphoethyl)-thiazole from 5-(2-hydroxyethyl)-4-methylthiazole: step 1/1. Functionally, catalyzes the phosphorylation of the hydroxyl group of 4-methyl-5-beta-hydroxyethylthiazole (THZ). The protein is Hydroxyethylthiazole kinase 2 of Streptococcus pneumoniae serotype 4 (strain ATCC BAA-334 / TIGR4).